The sequence spans 757 residues: Glutathione biosynthesis bifunctional protein GshAB (757 aa).

Residues 1–337 (MNIQQIVKEK…LGRARLGEVA (337 aa)) form a glutamate--cysteine ligase region. Residues 494 to 757 (KKVLAKAGFN…VLGMLFPELV (264 aa)) enclose the ATP-grasp domain. Residue 521-580 (PLFEGKAVVIKPKSTNFGLGISIFQQGVHDKADFAKAVEIAFREDKEVMVEDYLVGTEYR) participates in ATP binding. The Mg(2+) site is built by Asp-702, Glu-723, and Asn-725. 3 residues coordinate Mn(2+): Asp-702, Glu-723, and Asn-725.

This sequence in the N-terminal section; belongs to the glutamate--cysteine ligase type 1 family. Type 2 subfamily. Monomer. It depends on Mg(2+) as a cofactor. Requires Mn(2+) as cofactor.

It catalyses the reaction L-cysteine + L-glutamate + ATP = gamma-L-glutamyl-L-cysteine + ADP + phosphate + H(+). The enzyme catalyses gamma-L-glutamyl-L-cysteine + glycine + ATP = glutathione + ADP + phosphate + H(+). It participates in sulfur metabolism; glutathione biosynthesis; glutathione from L-cysteine and L-glutamate: step 1/2. It functions in the pathway sulfur metabolism; glutathione biosynthesis; glutathione from L-cysteine and L-glutamate: step 2/2. Synthesizes glutathione from L-glutamate and L-cysteine via gamma-L-glutamyl-L-cysteine. The protein is Glutathione biosynthesis bifunctional protein GshAB of Mannheimia succiniciproducens (strain KCTC 0769BP / MBEL55E).